Reading from the N-terminus, the 102-residue chain is Large ribosomal subunit protein bL28 (102 aa).

Residues 1–20 are disordered; sequence MSRRCELTAKGPQVGHKVSH.

Belongs to the bacterial ribosomal protein bL28 family.

The sequence is that of Large ribosomal subunit protein bL28 from Bradyrhizobium sp. (strain ORS 278).